We begin with the raw amino-acid sequence, 195 residues long: Interferon tau-6 (195 aa).

A signal peptide spans 1–23 (MAFVLSLLMALVLVSYGPGGSLG). 2 disulfide bridges follow: C24/C122 and C52/C162. N101 carries an N-linked (GlcNAc...) asparagine glycan.

This sequence belongs to the alpha/beta interferon family. IFN-alphaII subfamily. As to expression, constitutively and exclusively expressed in the mononuclear cells of the extraembryonic trophectoderm.

The protein localises to the secreted. Paracrine hormone primarily responsible for maternal recognition of pregnancy. Interacts with endometrial receptors, probably type I interferon receptors, and blocks estrogen receptor expression, preventing the estrogen-induced increase in oxytocin receptor expression in the endometrium. This results in the suppression of the pulsatile endometrial release of the luteolytic hormone prostaglandin F2-alpha, hindering the regression of the corpus luteum (luteolysis) and therefore a return to ovarian cyclicity. This, and a possible direct effect of IFN-tau on prostaglandin synthesis, leads in turn to continued ovarian progesterone secretion, which stimulates the secretion by the endometrium of the nutrients required for the growth of the conceptus. In summary, displays particularly high antiviral and antiproliferative potency concurrently with particular weak cytotoxicity, high antiluteolytic activity and immunomodulatory properties. In contrast with other IFNs, IFN-tau is not virally inducible. The chain is Interferon tau-6 (IFNT6) from Ovis aries (Sheep).